The chain runs to 88 residues: Actobindin (88 aa).

N-acetylmethionine is present on methionine 1. Residues 1–22 (MNPELQSAIGQGAALKHAETVD) form a disordered region. Lysine 35 carries the N6,N6,N6-trimethyllysine modification. A WH2 domain is found at 37-54 (DRSSFLEEVAKPHELKHA). The residue at position 72 (lysine 72) is an N6,N6,N6-trimethyllysine.

As to quaternary structure, monomer.

In terms of biological role, is able to bind two actin monomers at high concentrations of G-actin. This chain is Actobindin, found in Acanthamoeba castellanii (Amoeba).